A 65-amino-acid chain; its full sequence is Large ribosomal subunit protein bL28 (65 aa).

The disordered stretch occupies residues 1-21 (MPGRDQLTGQKALSGNKRSHA).

This sequence belongs to the bacterial ribosomal protein bL28 family.

In Metamycoplasma arthritidis (strain 158L3-1) (Mycoplasma arthritidis), this protein is Large ribosomal subunit protein bL28.